A 239-amino-acid chain; its full sequence is tRNA (guanine-N(7)-)-methyltransferase (239 aa).

Positions 69, 94, 121, and 144 each coordinate S-adenosyl-L-methionine. The active site involves D144. Substrate is bound at residue K148. The interval 150–155 (RHNKRR) is interaction with RNA. Residues D180 and 217–220 (TKFE) contribute to the substrate site.

It belongs to the class I-like SAM-binding methyltransferase superfamily. TrmB family. As to quaternary structure, monomer.

The catalysed reaction is guanosine(46) in tRNA + S-adenosyl-L-methionine = N(7)-methylguanosine(46) in tRNA + S-adenosyl-L-homocysteine. Its pathway is tRNA modification; N(7)-methylguanine-tRNA biosynthesis. Catalyzes the formation of N(7)-methylguanine at position 46 (m7G46) in tRNA. This chain is tRNA (guanine-N(7)-)-methyltransferase, found in Escherichia coli O6:H1 (strain CFT073 / ATCC 700928 / UPEC).